Here is a 233-residue protein sequence, read N- to C-terminus: Germin-like protein 3-7 (233 aa).

Residues 1-35 (MSSSSSMECTGNMSAAPLLVLTVAVLAVLASTCAA) form the signal peptide. Cys-44 and Cys-63 are oxidised to a cystine. Residues 77–225 (AGLAAAGSTD…SFQVDAEIIK (149 aa)) enclose the Cupin type-1 domain. Positions 125, 127, 132, and 171 each coordinate Mn(2+). Asn-178 carries N-linked (GlcNAc...) asparagine glycosylation.

Belongs to the germin family. Oligomer (believed to be a pentamer but probably hexamer).

Its subcellular location is the secreted. The protein localises to the extracellular space. It localises to the apoplast. In terms of biological role, may play a role in plant defense. Probably has no oxalate oxidase activity even if the active site is conserved. The polypeptide is Germin-like protein 3-7 (GER7) (Oryza sativa subsp. japonica (Rice)).